The chain runs to 156 residues: Small ribosomal subunit protein uS7 (156 aa).

Belongs to the universal ribosomal protein uS7 family. As to quaternary structure, part of the 30S ribosomal subunit. Contacts proteins S9 and S11.

In terms of biological role, one of the primary rRNA binding proteins, it binds directly to 16S rRNA where it nucleates assembly of the head domain of the 30S subunit. Is located at the subunit interface close to the decoding center, probably blocks exit of the E-site tRNA. The chain is Small ribosomal subunit protein uS7 from Azorhizobium caulinodans (strain ATCC 43989 / DSM 5975 / JCM 20966 / LMG 6465 / NBRC 14845 / NCIMB 13405 / ORS 571).